Consider the following 524-residue polypeptide: Ribonuclease Y (524 aa).

Residues 3 to 23 (IVINLFLIIFASVVFFAAGFF) traverse the membrane as a helical segment. Residues 214–274 (ALSVVHIQSD…LRREHAKLTL (61 aa)) enclose the KH domain. One can recognise an HD domain in the interval 340–432 (LLQHSREVAM…VDAANVISLA (93 aa)).

Belongs to the RNase Y family.

The protein resides in the cell membrane. Functionally, endoribonuclease that initiates mRNA decay. The chain is Ribonuclease Y from Chlorobium luteolum (strain DSM 273 / BCRC 81028 / 2530) (Pelodictyon luteolum).